Consider the following 170-residue polypeptide: Ribosome maturation factor RimP (170 aa).

The protein belongs to the RimP family.

Its subcellular location is the cytoplasm. Functionally, required for maturation of 30S ribosomal subunits. The polypeptide is Ribosome maturation factor RimP (Chlorobaculum parvum (strain DSM 263 / NCIMB 8327) (Chlorobium vibrioforme subsp. thiosulfatophilum)).